We begin with the raw amino-acid sequence, 197 residues long: Holliday junction branch migration complex subunit RuvA (197 aa).

Residues 1-64 (MIASVRGVVQ…EDMLALFGFS (64 aa)) are domain I. A domain II region spans residues 65–143 (SPAQRALFEL…VATISPQLST (79 aa)). The flexible linker stretch occupies residues 144-153 (NPGLLALNTE). Residues 153 to 197 (ELIDILTSLGYSTTEAQAALNALPADAPADTEERLRLALQYFGGV) form a domain III region.

Belongs to the RuvA family. As to quaternary structure, homotetramer. Forms an RuvA(8)-RuvB(12)-Holliday junction (HJ) complex. HJ DNA is sandwiched between 2 RuvA tetramers; dsDNA enters through RuvA and exits via RuvB. An RuvB hexamer assembles on each DNA strand where it exits the tetramer. Each RuvB hexamer is contacted by two RuvA subunits (via domain III) on 2 adjacent RuvB subunits; this complex drives branch migration. In the full resolvosome a probable DNA-RuvA(4)-RuvB(12)-RuvC(2) complex forms which resolves the HJ.

Its subcellular location is the cytoplasm. The RuvA-RuvB-RuvC complex processes Holliday junction (HJ) DNA during genetic recombination and DNA repair, while the RuvA-RuvB complex plays an important role in the rescue of blocked DNA replication forks via replication fork reversal (RFR). RuvA specifically binds to HJ cruciform DNA, conferring on it an open structure. The RuvB hexamer acts as an ATP-dependent pump, pulling dsDNA into and through the RuvAB complex. HJ branch migration allows RuvC to scan DNA until it finds its consensus sequence, where it cleaves and resolves the cruciform DNA. The protein is Holliday junction branch migration complex subunit RuvA of Herpetosiphon aurantiacus (strain ATCC 23779 / DSM 785 / 114-95).